Here is a 131-residue protein sequence, read N- to C-terminus: UPF0102 protein AZC_4471 (131 aa).

It belongs to the UPF0102 family.

This Azorhizobium caulinodans (strain ATCC 43989 / DSM 5975 / JCM 20966 / LMG 6465 / NBRC 14845 / NCIMB 13405 / ORS 571) protein is UPF0102 protein AZC_4471.